Reading from the N-terminus, the 165-residue chain is Large ribosomal subunit protein uL11 (165 aa).

Residue serine 38 is modified to Phosphoserine. A Glycyl lysine isopeptide (Lys-Gly) (interchain with G-Cter in SUMO2) cross-link involves residue lysine 40. Lysine 48 participates in a covalent cross-link: Glycyl lysine isopeptide (Lys-Gly) (interchain with G-Cter in ubiquitin). Lysine 54 carries the post-translational modification N6-acetyllysine. Residue lysine 83 forms a Glycyl lysine isopeptide (Lys-Gly) (interchain with G-Cter in ubiquitin) linkage. Serine 165 is subject to Phosphoserine.

This sequence belongs to the universal ribosomal protein uL11 family. Component of the large ribosomal subunit. Mature ribosomes consist of a small (40S) and a large (60S) subunit. The 40S subunit contains about 33 different proteins and 1 molecule of RNA (18S). The 60S subunit contains about 49 different proteins and 3 molecules of RNA (28S, 5.8S and 5S). In terms of processing, ubiquitinated at Lys-48 and Lys-83 by RNF14 and RNF25 in response to ribosome collisions (ribosome stalling).

Its subcellular location is the cytoplasm. Its function is as follows. Component of the large ribosomal subunit. The ribosome is a large ribonucleoprotein complex responsible for the synthesis of proteins in the cell. Binds directly to 26S ribosomal RNA. The chain is Large ribosomal subunit protein uL11 (Rpl12) from Rattus norvegicus (Rat).